The following is a 388-amino-acid chain: Galactokinase (388 aa).

Position 33–36 (33–36 (EHTD)) interacts with substrate. Residues Ser67 and 124 to 130 (GSGLSSS) contribute to the ATP site. Mg(2+)-binding residues include Ser130 and Glu162. Catalysis depends on Asp174, which acts as the Proton acceptor. Tyr224 serves as a coordination point for substrate.

Belongs to the GHMP kinase family. GalK subfamily.

Its subcellular location is the cytoplasm. The enzyme catalyses alpha-D-galactose + ATP = alpha-D-galactose 1-phosphate + ADP + H(+). Its pathway is carbohydrate metabolism; galactose metabolism. In terms of biological role, catalyzes the transfer of the gamma-phosphate of ATP to D-galactose to form alpha-D-galactose-1-phosphate (Gal-1-P). The sequence is that of Galactokinase from Streptococcus thermophilus (strain ATCC BAA-491 / LMD-9).